Consider the following 79-residue polypeptide: Sec-independent protein translocase protein TatA (79 aa).

The chain crosses the membrane as a helical span at residues 1–21 (MGEFSLTHILLLAVIFLIFFG). The segment at 52–79 (DIHDNQQVSHQNKQSMGQTQKQGENQNS) is disordered. Polar residues predominate over residues 56 to 79 (NQQVSHQNKQSMGQTQKQGENQNS).

The protein belongs to the TatA/E family. In terms of assembly, the Tat system comprises two distinct complexes: a TatABC complex, containing multiple copies of TatA, TatB and TatC subunits, and a separate TatA complex, containing only TatA subunits. Substrates initially bind to the TatABC complex, which probably triggers association of the separate TatA complex to form the active translocon.

It localises to the cell inner membrane. Its function is as follows. Part of the twin-arginine translocation (Tat) system that transports large folded proteins containing a characteristic twin-arginine motif in their signal peptide across membranes. TatA could form the protein-conducting channel of the Tat system. This chain is Sec-independent protein translocase protein TatA, found in Bdellovibrio bacteriovorus (strain ATCC 15356 / DSM 50701 / NCIMB 9529 / HD100).